A 260-amino-acid polypeptide reads, in one-letter code: MVLDEIVRHKKKEVEEKKRIKPVEELINEIKGGYSGNFKKVLQKEGISIIGEIKQASPSKGIIKEDFDSVKIAKVYEKVDVDAISVLTEKEFFKGDDNYIREVKKVSSKPILRKDFIVDEYQIYESKILGADAVLLIVSVLGDKLRDFYNLSKSVGLDVLVEIHDRQQLEIALEAGCDIIGINNRDLKTFNVDINTTENLIKYIPQNTTIVSESGIKTPEDIRYLASLGVDAVLIGETFMKIIDDIDKISDFVKEAKGGG.

The protein belongs to the TrpC family.

It catalyses the reaction 1-(2-carboxyphenylamino)-1-deoxy-D-ribulose 5-phosphate + H(+) = (1S,2R)-1-C-(indol-3-yl)glycerol 3-phosphate + CO2 + H2O. It participates in amino-acid biosynthesis; L-tryptophan biosynthesis; L-tryptophan from chorismate: step 4/5. The chain is Indole-3-glycerol phosphate synthase from Thermoanaerobacter sp. (strain X514).